An 82-amino-acid chain; its full sequence is Cytochrome b559 subunit alpha (82 aa).

The helical transmembrane segment at 22–36 (VIHAVTLPSIFLAGF) threads the bilayer. A heme-binding site is contributed by histidine 24.

It belongs to the PsbE/PsbF family. In terms of assembly, heterodimer of an alpha subunit and a beta subunit. PSII is composed of 1 copy each of membrane proteins PsbA, PsbB, PsbC, PsbD, PsbE, PsbF, PsbH, PsbI, PsbJ, PsbK, PsbL, PsbM, PsbT, PsbX, PsbY, PsbZ, Psb30/Ycf12, peripheral proteins PsbO, CyanoQ (PsbQ), PsbU, PsbV and a large number of cofactors. It forms dimeric complexes. Heme b is required as a cofactor.

The protein resides in the cellular thylakoid membrane. In terms of biological role, this b-type cytochrome is tightly associated with the reaction center of photosystem II (PSII). PSII is a light-driven water:plastoquinone oxidoreductase that uses light energy to abstract electrons from H(2)O, generating O(2) and a proton gradient subsequently used for ATP formation. It consists of a core antenna complex that captures photons, and an electron transfer chain that converts photonic excitation into a charge separation. The protein is Cytochrome b559 subunit alpha of Synechococcus sp. (strain CC9605).